The chain runs to 484 residues: tRNA nucleotidyltransferase cca2 (484 aa).

A B/A element motif is present at residues 122–124 (RAE). The segment at 125 to 142 (SYDDKSRIPSVTPGTVET) is flexible loop. An ERhxxExxxhh motif motif is present at residues 234–244 (ERVGEEIEKML).

This sequence belongs to the tRNA nucleotidyltransferase/poly(A) polymerase family.

It localises to the cytoplasm. The catalysed reaction is a tRNA with a 3' CC end + ATP = a tRNA with a 3' CCA end + diphosphate. In terms of biological role, tRNA nucleotidyltransferase involved in the synthesis of the tRNA CCA terminus. In contrast to what is usually observed in eukaryotes for which one enzyme synthesizes the whole tRNA CCA terminus, in S.pombe, cca1 specifically adds two cytidine residues to a tRNA substrate lacking this sequence while cca2 specifically adds the terminal adenosine residue thereby completing the CCA sequence. In Schizosaccharomyces pombe (strain 972 / ATCC 24843) (Fission yeast), this protein is tRNA nucleotidyltransferase cca2.